A 621-amino-acid chain; its full sequence is MSSSKIAVLYGSETGNAQDFAAILSHKLNRLHFKHTFSSLADYKREDILRCRYLFIVCSTTGQGELPRNVYETVTGDQKNTLWTFLKKKKLPADFLNHIKTAFLGLGDSSYPKFNYALRIIHNRMVNQLGAKEIFDRMEADEQSMAGSNKGTGLGIESVYFEFEKRIITYLMDRFPTRKVGNEIIQREEIDKELYLEPITYLRIDDPHDQQSFSGGPTTFVGDKLIKTGTITLNKRITAKDHFQDVRQFTFESCDDIKYKPGDTVALYSYNTDQSVERMLECQPQWIPLADKPLSFTNGIPTHLLDGGVVQPLTLRNLLKYHCDFMSIPRSSFFLKIWTFATDVTRMERGEEQMKDQRQKLYEFATDEDMQELYDYCNRPRRSILEVMEDFLSIRLPLEYLLDFFPPIKPRLYSISSTANCNNIELTVAIVKYKTILRKIRTGVCTDFISKLKVGDKIRYKIQQNDLIKEEYRSNPFVMVGPGVGLAPLLSAVRSKVSPEMSLYFGCRFKDKDYLHGKELEDMANQGLIKFYPVFSRDRENSPDTKYVQDVLWKFGEEVTNLLVERKGIFFLCGASGKMPIQIRLTLLEMLKKWGGFKDDASAKEYLRSMEKEYRYIQETW.

The Flavodoxin-like domain maps to 6-168; it reads IAVLYGSETG…VYFEFEKRII (163 aa). FMN-binding positions include 12-17, 59-62, 106-115, and Glu-142; these read SETGNA, STTG, and LGDSSYPKFN. Residues 224–489 form the FAD-binding FR-type domain; sequence KLIKTGTITL…VGPGVGLAPL (266 aa). Residues Arg-381, 411–414, and 443–446 each bind FAD; these read RLYS and GVCT. Residues 536-537 and 545-549 each bind NADP(+); these read SR and TKYVQ. Residue Trp-621 participates in FAD binding.

Belongs to the NADPH-dependent diflavin oxidoreductase NDOR1 family. This sequence in the N-terminal section; belongs to the flavodoxin family. It in the C-terminal section; belongs to the flavoprotein pyridine nucleotide cytochrome reductase family. Interacts with DRE2; as part of the cytosolic iron-sulfur (Fe-S) protein assembly (CIA) machinery. Requires FAD as cofactor. It depends on FMN as a cofactor.

It localises to the cytoplasm. The protein resides in the mitochondrion. The catalysed reaction is 2 oxidized [2Fe-2S]-[protein] + NADPH = 2 reduced [2Fe-2S]-[protein] + NADP(+) + H(+). NADPH-dependent reductase which is a central component of the cytosolic iron-sulfur (Fe-S) protein assembly (CIA) machinery. Transfers electrons from NADPH via its FAD and FMN prosthetic groups to the [2Fe-2S] cluster of DRE2, another key component of the CIA machinery. In turn, this reduced cluster provides electrons for assembly of cytosolic iron-sulfur cluster proteins. Positively controls H(2)O(2)-induced cell death. The sequence is that of NADPH-dependent diflavin oxidoreductase 1 from Candida glabrata (strain ATCC 2001 / BCRC 20586 / JCM 3761 / NBRC 0622 / NRRL Y-65 / CBS 138) (Yeast).